Consider the following 214-residue polypeptide: Immunoglobulin lambda-like polypeptide 5 (214 aa).

An N-terminal signal peptide occupies residues 1–35 (MRPKTGQVGCETPEELGPGPRQRWPLLLLGLAMVA). The segment at 98–109 (VFGTGTKVTVLG) is j region. Residues 110–214 (QPKANPTVTL…EKTVAPTECS (105 aa)) are c region. The Ig-like C1-type domain occupies 115-209 (PTVTLFPPSS…EGSTVEKTVA (95 aa)). Cysteines 136 and 195 form a disulfide.

As to expression, contrary to IGLL1, not expressed in pre-B-cells.

Its subcellular location is the secreted. In Homo sapiens (Human), this protein is Immunoglobulin lambda-like polypeptide 5 (IGLL5).